A 487-amino-acid polypeptide reads, in one-letter code: Chromosomal replication initiator protein DnaA (487 aa).

The interval 1–71 (MMHDALFERF…TSLVQSEDPD (71 aa)) is domain I, interacts with DnaA modulators. The interval 71-141 (DVLKVEILVR…QGGSGPLFGS (71 aa)) is domain II. The segment at 142–364 (PLDTRFTFDT…GAFNQLMFRR (223 aa)) is domain III, AAA+ region. ATP contacts are provided by Gly-188, Gly-190, Lys-191, and Thr-192. Positions 365–487 (SFEPNLSVDR…LKRLINENNA (123 aa)) are domain IV, binds dsDNA.

Belongs to the DnaA family. Oligomerizes as a right-handed, spiral filament on DNA at oriC.

Its subcellular location is the cytoplasm. Plays an essential role in the initiation and regulation of chromosomal replication. ATP-DnaA binds to the origin of replication (oriC) to initiate formation of the DNA replication initiation complex once per cell cycle. Binds the DnaA box (a 9 base pair repeat at the origin) and separates the double-stranded (ds)DNA. Forms a right-handed helical filament on oriC DNA; dsDNA binds to the exterior of the filament while single-stranded (ss)DNA is stabiized in the filament's interior. The ATP-DnaA-oriC complex binds and stabilizes one strand of the AT-rich DNA unwinding element (DUE), permitting loading of DNA polymerase. After initiation quickly degrades to an ADP-DnaA complex that is not apt for DNA replication. Binds acidic phospholipids. This is Chromosomal replication initiator protein DnaA from Agrobacterium fabrum (strain C58 / ATCC 33970) (Agrobacterium tumefaciens (strain C58)).